The primary structure comprises 393 residues: Acetate kinase (393 aa).

Asn-8 lines the Mg(2+) pocket. Position 15 (Lys-15) interacts with ATP. Arg-91 is a substrate binding site. Asp-148 acts as the Proton donor/acceptor in catalysis. Residues 206 to 210 (HLGSG), 280 to 282 (DMR), and 325 to 329 (GVGEN) contribute to the ATP site. Mg(2+) is bound at residue Glu-376.

This sequence belongs to the acetokinase family. As to quaternary structure, homodimer. It depends on Mg(2+) as a cofactor. Requires Mn(2+) as cofactor.

It is found in the cytoplasm. It catalyses the reaction acetate + ATP = acetyl phosphate + ADP. It participates in metabolic intermediate biosynthesis; acetyl-CoA biosynthesis; acetyl-CoA from acetate: step 1/2. Catalyzes the formation of acetyl phosphate from acetate and ATP. Can also catalyze the reverse reaction. In Rhizobium meliloti (Ensifer meliloti), this protein is Acetate kinase.